The chain runs to 2561 residues: Squalestatin hexaketide synthase (2561 aa).

The segment at Met1–Phe77 is disordered. Low complexity predominate over residues Asn20 to Thr74. The 421-residue stretch at Gln83–Ser503 folds into the Ketosynthase family 3 (KS3) domain. Residues Cys253, His390, and His427 each act as for beta-ketoacyl synthase activity in the active site. The interval Phe603 to Phe925 is malonyl-CoA:ACP transacylase (MAT) domain. The N-terminal hotdog fold stretch occupies residues His972–Ser1101. The tract at residues His972–Glu1253 is dehydratase (DH) domain. A PKS/mFAS DH domain is found at His972 to Gln1257. Catalysis depends on His1004, which acts as the Proton acceptor; for dehydratase activity. Positions Thr1112 to Gln1257 are C-terminal hotdog fold. The active-site Proton donor; for dehydratase activity is the Asp1174. Residues Ser1421–Leu1599 form a methyltransferase (CMet) domain region. The interval Gly1826 to Val2146 is enoyl reductase (ER) (ER) domain. The tract at residues Ser2170 to Ile2343 is ketoreductase (KR) domain. Positions Val2472–Leu2550 constitute a Carrier domain. Ser2509 carries the post-translational modification O-(pantetheine 4'-phosphoryl)serine.

It participates in secondary metabolite biosynthesis. Highly reducing polyketide synthase (HR-PKS); part of the gene cluster that mediates the biosynthesis of squalestatin S1 (SQS1, also known as zaragozic acid A), a heavily oxidized fungal polyketide that offers potent cholesterol lowering activity by targeting squalene synthase (SS). SQS1 is composed of a 2,8-dioxobicyclic[3.2.1]octane-3,4,5-tricarboxyclic acid core that is connected to two lipophilic polyketide arms. These initial steps feature the priming of an unusual benzoic acid starter unit onto the highly reducing polyketide synthase pks2, followed by oxaloacetate extension and product release to generate a tricarboxylic acid containing product. The phenylalanine ammonia lyase (PAL) M7 and the acyl-CoA ligase M9 are involved in transforming phenylalanine into benzoyl-CoA. The citrate synthase-like protein R3 is involved in connecting the C-alpha-carbons of the hexaketide chain and oxaloacetate to afford the tricarboxylic acid unit. The potential hydrolytic enzymes, M8 and M10, are in close proximity to pks2 and may participate in product release. On the other side, the tetraketide arm is synthesized by a the squalestatin tetraketide synthase pks1 and enzymatically esterified to the core in the last biosynthetic step, by the acetyltransferase M4. The biosynthesis of the tetraketide must involve 3 rounds of chain extension. After the first and second rounds methyl-transfer occurs, and in all rounds of extension the ketoreductase and dehydratase are active. The enoyl reductase and C-MeT of pks1 are not active in the final round of extension. The acetyltransferase M4 appears to have a broad substrate selectivity for its acyl CoA substrate, allowing the in vitro synthesis of novel squalestatins. The biosynthesis of SQS1 requires several oxidative steps likely performed by oxidoreductases M1, R1 and R2. Finally, in support of the identification of the cluster as being responsible for SQS1 production, the cluster contains a gene encoding a putative squalene synthase (SS) R6, suggesting a likely mechanism for self-resistance. In Phoma sp. (strain ATCC 20986 / MF5453), this protein is Squalestatin hexaketide synthase.